The primary structure comprises 494 residues: Protein nucleotidyltransferase YdiU (494 aa).

Gly101, Gly103, Arg104, Lys123, Asp135, Gly136, Arg186, and Arg193 together coordinate ATP. Asp262 serves as the catalytic Proton acceptor. Mg(2+) contacts are provided by Asn263 and Asp272. Asp272 is an ATP binding site.

The protein belongs to the SELO family. It depends on Mg(2+) as a cofactor. The cofactor is Mn(2+).

It catalyses the reaction L-seryl-[protein] + ATP = 3-O-(5'-adenylyl)-L-seryl-[protein] + diphosphate. It carries out the reaction L-threonyl-[protein] + ATP = 3-O-(5'-adenylyl)-L-threonyl-[protein] + diphosphate. The catalysed reaction is L-tyrosyl-[protein] + ATP = O-(5'-adenylyl)-L-tyrosyl-[protein] + diphosphate. The enzyme catalyses L-histidyl-[protein] + UTP = N(tele)-(5'-uridylyl)-L-histidyl-[protein] + diphosphate. It catalyses the reaction L-seryl-[protein] + UTP = O-(5'-uridylyl)-L-seryl-[protein] + diphosphate. It carries out the reaction L-tyrosyl-[protein] + UTP = O-(5'-uridylyl)-L-tyrosyl-[protein] + diphosphate. In terms of biological role, nucleotidyltransferase involved in the post-translational modification of proteins. It can catalyze the addition of adenosine monophosphate (AMP) or uridine monophosphate (UMP) to a protein, resulting in modifications known as AMPylation and UMPylation. This is Protein nucleotidyltransferase YdiU from Chromohalobacter salexigens (strain ATCC BAA-138 / DSM 3043 / CIP 106854 / NCIMB 13768 / 1H11).